Here is a 282-residue protein sequence, read N- to C-terminus: Acetyl-coenzyme A carboxylase carboxyl transferase subunit beta (282 aa).

A CoA carboxyltransferase N-terminal domain is found at 26-282 (GLWHQTPTGK…VSKTVKLLVH (257 aa)).

It belongs to the AccD/PCCB family. As to quaternary structure, acetyl-CoA carboxylase is a heterohexamer composed of biotin carboxyl carrier protein (AccB), biotin carboxylase (AccC) and two subunits each of ACCase subunit alpha (AccA) and ACCase subunit beta (AccD).

Its subcellular location is the cytoplasm. It carries out the reaction N(6)-carboxybiotinyl-L-lysyl-[protein] + acetyl-CoA = N(6)-biotinyl-L-lysyl-[protein] + malonyl-CoA. Its pathway is lipid metabolism; malonyl-CoA biosynthesis; malonyl-CoA from acetyl-CoA: step 1/1. Functionally, component of the acetyl coenzyme A carboxylase (ACC) complex. Biotin carboxylase (BC) catalyzes the carboxylation of biotin on its carrier protein (BCCP) and then the CO(2) group is transferred by the transcarboxylase to acetyl-CoA to form malonyl-CoA. This chain is Acetyl-coenzyme A carboxylase carboxyl transferase subunit beta, found in Flavobacteriaceae bacterium (strain 3519-10).